We begin with the raw amino-acid sequence, 616 residues long: Tumor necrosis factor receptor superfamily member 11A (616 aa).

An N-terminal signal peptide occupies residues 1-29 (MAPRARRRRPLFALLLLCALLARLQVALQ). Residues 30-212 (IAPPCTSEKH…PPNEPHVYLP (183 aa)) lie on the Extracellular side of the membrane. Cystine bridges form between C34–C46, C47–C60, C50–C68, C71–C86, C92–C112, C114–C127, C124–C126, C133–C151, and C154–C169. TNFR-Cys repeat units follow at residues 34–68 (CTSEKHYEHLGRCCNKCEPGKYMSSKCTTTSDSVC), 71–112 (CGPD…PRRC), 114–151 (CTAGYHWSQDCECCRRNTECAPGLGAQHPLQLNKDTVC), and 154–194 (CLAG…DAVC). N105 carries N-linked (GlcNAc...) asparagine glycosylation. Na(+) contacts are provided by C133, A134, and S160. N-linked (GlcNAc...) asparagine glycosylation is present at N174. C175 and C194 are disulfide-bonded. A helical membrane pass occupies residues 213–233 (GLIILLLFASVALVAAIIFGV). At 234-616 (CYRKKGKALT…PVQEQGGAKA (383 aa)) the chain is on the cytoplasmic side. The interval 468–536 (PLPQCAYGMG…GNSNSTFISS (69 aa)) is disordered. The segment covering 483-493 (EASRTEARDQP) has biased composition (basic and acidic residues). Low complexity predominate over residues 499–508 (GRLPSSARAG). Polar residues predominate over residues 524-536 (NVTGNSNSTFISS). The segment at 544–549 (GDIIVV) is required for interaction with EEIG1 and osteoclast differentiation. The tract at residues 556 to 616 (QEGAAAAAEP…PVQEQGGAKA (61 aa)) is disordered. A compositionally biased stretch (basic and acidic residues) spans 570–580 (VQEETLARRDS). Phosphoserine is present on S580.

Binds to the clefts between the subunits of the TNFSF11 ligand trimer to form a heterohexamer. Part of a complex composed of EEIG1, TNFRSF11A/RANK, PLCG2, GAB2, TEC and BTK; complex formation increases in the presence of TNFSF11/RANKL. Interacts with TRAF1, TRAF2, TRAF3, TRAF5 and TRAF6. Interacts (via cytoplasmic domain) with GAB2. Interacts (via cytoplasmic domain); with EEIG1 (via N-terminus); when in the presence of TNFSF11/RANKL. Ubiquitous expression with high levels in skeletal muscle, thymus, liver, colon, small intestine and adrenal gland.

It is found in the cell membrane. The protein resides in the membrane raft. In terms of biological role, receptor for TNFSF11/RANKL/TRANCE/OPGL; essential for RANKL-mediated osteoclastogenesis. Its interaction with EEIG1 promotes osteoclastogenesis via facilitating the transcription of NFATC1 and activation of PLCG2. Involved in the regulation of interactions between T-cells and dendritic cells. In Homo sapiens (Human), this protein is Tumor necrosis factor receptor superfamily member 11A (TNFRSF11A).